The primary structure comprises 428 residues: Glutamate-1-semialdehyde 2,1-aminomutase (428 aa).

N6-(pyridoxal phosphate)lysine is present on lysine 265.

The protein belongs to the class-III pyridoxal-phosphate-dependent aminotransferase family. HemL subfamily. As to quaternary structure, homodimer. It depends on pyridoxal 5'-phosphate as a cofactor.

It localises to the cytoplasm. The catalysed reaction is (S)-4-amino-5-oxopentanoate = 5-aminolevulinate. It participates in porphyrin-containing compound metabolism; protoporphyrin-IX biosynthesis; 5-aminolevulinate from L-glutamyl-tRNA(Glu): step 2/2. This is Glutamate-1-semialdehyde 2,1-aminomutase from Thioalkalivibrio sulfidiphilus (strain HL-EbGR7).